The sequence spans 57 residues: MAVPKKRTSMSKKRIRRNIWKKKGYWAAVKALSLAKSISTGHSKSFFVRQTSNKALE.

The protein belongs to the bacterial ribosomal protein bL32 family.

It localises to the plastid. Its subcellular location is the chloroplast. The chain is Large ribosomal subunit protein bL32c from Liriodendron tulipifera (Tuliptree).